A 488-amino-acid chain; its full sequence is Pre-glycoprotein polyprotein GP complex (488 aa).

A lipid anchor (N-myristoyl glycine; by host) is attached at glycine 2. Residues 2–17 are Extracellular-facing; it reads GQLFSFFEEVPNIIHE. The chain crosses the membrane as a helical span at residues 18 to 32; the sequence is AINIALIAVSLIAAL. A topological domain (cytoplasmic) is located at residue lysine 33. A helical transmembrane segment spans residues 34 to 53; the sequence is GMINLWKSGLFQLIFFLTLA. Extracellular-side segments run 54–58 and 59–427; these read GRSCS and FRIG…TLVD. Cysteine 57 serves as a coordination point for Zn(2+). N-linked (GlcNAc...) asparagine; by host glycans are attached at residues asparagine 69, asparagine 88, asparagine 99, asparagine 125, asparagine 171, asparagine 178, and asparagine 222. 4 cysteine pairs are disulfide-bonded: cysteine 85–cysteine 229, cysteine 274–cysteine 287, cysteine 296–cysteine 305, and cysteine 359–cysteine 380. 4 N-linked (GlcNAc...) asparagine; by host glycosylation sites follow: asparagine 360, asparagine 368, asparagine 385, and asparagine 390. A helical membrane pass occupies residues 428-448; the sequence is ICFWSTLFFTTTLFLHLVGFP. Residues 449–488 are Cytoplasmic-facing; that stretch reads THRHIRGEPCPLPHRLNSRGGCRCGKYPELKKPITWHKNH. Positions 450, 452, 458, 462, 470, 472, and 488 each coordinate Zn(2+).

It belongs to the arenaviridae GPC protein family. In terms of assembly, homotetramer; disulfide-linked. Homotetramer. GP2 homotetramers bind through ionic interactions with GP1 homotetramers to form the GP complex together with the stable signal peptide. The GP-C polyprotein interacts with the host protease MBTPS1/SKI-1 resulting in the polyprotein processing. Specific enzymatic cleavages in vivo yield mature proteins. GP-C polyprotein is cleaved in the endoplasmic reticulum by the host protease MBTPS1. Only cleaved glycoprotein is incorporated into virions. In terms of processing, the SSP remains stably associated with the GP complex following cleavage by signal peptidase and plays crucial roles in the trafficking of GP through the secretory pathway. Post-translationally, myristoylation is necessary for GP2-mediated fusion activity.

The protein resides in the virion membrane. It localises to the host endoplasmic reticulum membrane. It is found in the host Golgi apparatus membrane. Its subcellular location is the host cell membrane. In terms of biological role, interacts with the host receptor. Mediates virus attachment to host TFRC. This attachment induces virion internalization predominantly through clathrin-mediated endocytosis. Its function is as follows. Class I viral fusion protein that directs fusion of viral and host endosomal membranes, leading to delivery of the nucleocapsid into the cytoplasm. Membrane fusion is mediated by irreversible conformational changes induced upon acidification in the endosome. Stable signal peptide (SSP): cleaved and functions as a signal peptide. In addition, it is also retained as the third component of the GP complex. The SSP is required for efficient glycoprotein expression, post-translational maturation cleavage of GP1 and GP2, glycoprotein transport to the cell surface plasma membrane, formation of infectious virus particles, and acid pH-dependent glycoprotein-mediated cell fusion. This is Pre-glycoprotein polyprotein GP complex from Homo sapiens (Human).